The following is a 215-amino-acid chain: MPKETKETKKYKVEDEFAKAEKTSFVHIPSIKLDTSTLANNFKSLNKNIIPSGKLDYDNDNNENNNNNNENKHIDKRPQLISKKDKRKQKKEAFLQKFNPSLKLQKKKQQDDDESNDGLGMGGVLSSIDLLKDSMKLQPKTKGPKLTNEKRKKMSLKEANQYKNVLSHPSFKANPFATLQEHLANSVALQNQKIKQEQDFKPNNNNNNRNKLKRK.

Disordered stretches follow at residues 49–121 (IIPS…GLGM), 133–157 (DSMK…MSLK), and 189–215 (LQNQ…LKRK).

Belongs to the SLX9 family.

It is found in the nucleus. Its subcellular location is the nucleolus. Involved in ribosome biogenesis. The sequence is that of Putative ribosome biogenesis protein slx9-like from Dictyostelium discoideum (Social amoeba).